A 589-amino-acid chain; its full sequence is Carbonic anhydrase (589 aa).

2 consecutive Alpha-carbonic anhydrase domains span residues 59–316 (HDYN…YEYK) and 321–585 (DKYN…YGYN). Position 258-259 (258-259 (TT)) interacts with substrate. The catalytic stretch occupies residues 390-589 (MQINFGDPPA…TVYGYNGAAA (200 aa)). The Zn(2+) site is built by His420, His422, and His440.

The protein belongs to the alpha-carbonic anhydrase family. Zn(2+) is required as a cofactor.

It catalyses the reaction hydrogencarbonate + H(+) = CO2 + H2O. Its function is as follows. Reversible hydration of carbon dioxide. This is Carbonic anhydrase (DCA) from Dunaliella salina (Green alga).